A 583-amino-acid chain; its full sequence is CTP synthase (583 aa).

The tract at residues 1–278 (MRRHPQTATK…DAFVVRRLNL (278 aa)) is amidoligase domain. Ser-20 is a binding site for CTP. Residue Ser-20 participates in UTP binding. ATP contacts are provided by residues 21-26 (SLGKGL) and Asp-78. Mg(2+) contacts are provided by Asp-78 and Glu-152. Residues 159–161 (DIE), 199–204 (KTKPTQ), and Lys-235 contribute to the CTP site. UTP is bound by residues 199-204 (KTKPTQ) and Lys-235. Residues 303–551 (RIALVGKYVE…VKAAIDYKEG (249 aa)) enclose the Glutamine amidotransferase type-1 domain. Gly-366 contacts L-glutamine. Catalysis depends on Cys-393, which acts as the Nucleophile; for glutamine hydrolysis. Residues 394-397 (LGLQ), Glu-416, and Arg-477 contribute to the L-glutamine site. Active-site residues include His-524 and Glu-526. The tract at residues 559–583 (PERVSNGAERRDQVGQSIPEPANRG) is disordered.

The protein belongs to the CTP synthase family. Homotetramer.

The catalysed reaction is UTP + L-glutamine + ATP + H2O = CTP + L-glutamate + ADP + phosphate + 2 H(+). The enzyme catalyses L-glutamine + H2O = L-glutamate + NH4(+). It carries out the reaction UTP + NH4(+) + ATP = CTP + ADP + phosphate + 2 H(+). It participates in pyrimidine metabolism; CTP biosynthesis via de novo pathway; CTP from UDP: step 2/2. With respect to regulation, allosterically activated by GTP, when glutamine is the substrate; GTP has no effect on the reaction when ammonia is the substrate. The allosteric effector GTP functions by stabilizing the protein conformation that binds the tetrahedral intermediate(s) formed during glutamine hydrolysis. Inhibited by the product CTP, via allosteric rather than competitive inhibition. In terms of biological role, catalyzes the ATP-dependent amination of UTP to CTP with either L-glutamine or ammonia as the source of nitrogen. Regulates intracellular CTP levels through interactions with the four ribonucleotide triphosphates. In Mycobacterium ulcerans (strain Agy99), this protein is CTP synthase.